The primary structure comprises 78 residues: Acyl carrier protein (78 aa).

One can recognise a Carrier domain in the interval 2–77; it reads SSIEERVKKI…LAINYINENL (76 aa). Ser37 carries the post-translational modification O-(pantetheine 4'-phosphoryl)serine.

It belongs to the acyl carrier protein (ACP) family. Post-translationally, 4'-phosphopantetheine is transferred from CoA to a specific serine of apo-ACP by AcpS. This modification is essential for activity because fatty acids are bound in thioester linkage to the sulfhydryl of the prosthetic group.

Its subcellular location is the cytoplasm. The protein operates within lipid metabolism; fatty acid biosynthesis. Its function is as follows. Carrier of the growing fatty acid chain in fatty acid biosynthesis. This chain is Acyl carrier protein, found in Saccharophagus degradans (strain 2-40 / ATCC 43961 / DSM 17024).